The following is a 137-amino-acid chain: Putative pre-16S rRNA nuclease (137 aa).

This sequence belongs to the YqgF nuclease family.

It localises to the cytoplasm. Could be a nuclease involved in processing of the 5'-end of pre-16S rRNA. In Flavobacterium psychrophilum (strain ATCC 49511 / DSM 21280 / CIP 103535 / JIP02/86), this protein is Putative pre-16S rRNA nuclease.